The sequence spans 370 residues: Accessory Sec system protein translocase subunit SecY2 (370 aa).

The next 9 helical transmembrane spans lie at 17 to 37 (IIFT…PAIT), 65 to 85 (VFSL…LFYY), 105 to 125 (IFTL…LLSH), 134 to 154 (WLII…SDLN), 155 to 175 (MRFG…RSIM), 188 to 208 (LLIS…FIEI), 240 to 260 (IAIM…NLIV), 276 to 296 (FSTP…SYGI), and 339 to 359 (WIGA…TLLI).

This sequence belongs to the SecY/SEC61-alpha family. SecY2 subfamily. Component of the accessory SecA2/SecY2 protein translocase complex required to export cell wall proteins. May form heterotrimers with SecE and SecG subunits.

It is found in the cell membrane. Part of the accessory SecA2/SecY2 system specifically required for export of possible cell wall proteins. The central subunit of a protein translocation channel. This chain is Accessory Sec system protein translocase subunit SecY2, found in Staphylococcus carnosus (strain TM300).